A 254-amino-acid chain; its full sequence is Probable electron transfer flavoprotein subunit beta (254 aa).

The protein belongs to the ETF beta-subunit/FixA family. As to quaternary structure, heterodimer of an alpha and a beta subunit. The cofactor is FAD. It depends on AMP as a cofactor.

Its subcellular location is the mitochondrion matrix. Its function is as follows. The electron transfer flavoprotein serves as a specific electron acceptor for several dehydrogenases, including five acyl-CoA dehydrogenases, glutaryl-CoA and sarcosine dehydrogenase. It transfers the electrons to the main mitochondrial respiratory chain via ETF-ubiquinone oxidoreductase (ETF dehydrogenase). In Schizosaccharomyces pombe (strain 972 / ATCC 24843) (Fission yeast), this protein is Probable electron transfer flavoprotein subunit beta.